We begin with the raw amino-acid sequence, 124 residues long: Small ribosomal subunit protein uS13 (124 aa).

The disordered stretch occupies residues 95–124 (GLPVRGQRTKTNARTRKGPKRTIAGKKKAR).

This sequence belongs to the universal ribosomal protein uS13 family. As to quaternary structure, part of the 30S ribosomal subunit. Forms a loose heterodimer with protein S19. Forms two bridges to the 50S subunit in the 70S ribosome.

In terms of biological role, located at the top of the head of the 30S subunit, it contacts several helices of the 16S rRNA. In the 70S ribosome it contacts the 23S rRNA (bridge B1a) and protein L5 of the 50S subunit (bridge B1b), connecting the 2 subunits; these bridges are implicated in subunit movement. Contacts the tRNAs in the A and P-sites. The polypeptide is Small ribosomal subunit protein uS13 (Mycolicibacterium smegmatis (strain ATCC 700084 / mc(2)155) (Mycobacterium smegmatis)).